Reading from the N-terminus, the 460-residue chain is RING finger protein DG17 (460 aa).

Residues C27–K67 form an RING-type zinc finger. 2 consecutive TRAF-type zinc fingers follow at residues S141 to L194 and T196 to Q253. Residues I269–S294 are a coiled coil. Residues G320–I448 form the MATH domain.

Belongs to the TNF receptor-associated factor family. A subfamily.

It localises to the cytoplasm. Its function is as follows. Probable adapter protein and signal transducer that links members of the tumor necrosis factor receptor family to different signaling pathways by association with the receptor cytoplasmic domain and kinases. The protein is RING finger protein DG17 (zfaA) of Dictyostelium discoideum (Social amoeba).